Here is a 442-residue protein sequence, read N- to C-terminus: Elongation factor 1-gamma (442 aa).

Residues 2–87 (AAGTLYTYPE…FLSNDALRGS (86 aa)) form the GST N-terminal domain. In terms of domain architecture, GST C-terminal spans 88–216 (TPQASAQVLQ…VKLCEKMAQF (129 aa)). Composition is skewed to basic and acidic residues over residues 224–242 (MQPK…KEGG) and 249–263 (QEKK…KAAP). The disordered stretch occupies residues 224–273 (MQPKKEAPAKKEKAGKEGGKQQQPQQEKKEKKKEEKKAAPAEEEMDECEA). In terms of domain architecture, EF-1-gamma C-terminal spans 281 to 442 (AKDPYAHLPK…KSFNQGKIFK (162 aa)).

EF-1 is composed of four subunits: alpha, beta, delta, and gamma.

Its function is as follows. Probably plays a role in anchoring the complex to other cellular components. In Carassius auratus (Goldfish), this protein is Elongation factor 1-gamma (eef1g).